The following is a 382-amino-acid chain: Leucoanthocyanidin reductase (382 aa).

Residues 19 to 25, arginine 44, and lysine 52 contribute to the NADP(+) site; that span reads GGTGFIG. The active-site Proton acceptor is lysine 142. NADP(+) is bound at residue arginine 146.

It belongs to the NmrA-type oxidoreductase family. Isoflavone reductase subfamily. In terms of assembly, monomer.

The enzyme catalyses (2R,3S)-catechin + NADP(+) + H2O = (2R,3S,4S)-leucocyanidin + NADPH + H(+). The protein operates within flavonoid metabolism; proanthocyanidin biosynthesis. Functionally, catalyzes the synthesis of catechin from 3,4-cis-leucocyanidin. Also synthesizes afzelechin and gallocatechin. The sequence is that of Leucoanthocyanidin reductase (LAR) from Desmodium uncinatum (Silverleaf Spanish clover).